The chain runs to 21 residues: Glutathione S-transferase 1 (21 aa).

This sequence belongs to the GST superfamily. Phi family.

It carries out the reaction RX + glutathione = an S-substituted glutathione + a halide anion + H(+). Its function is as follows. Conjugation of reduced glutathione to a wide number of exogenous and endogenous hydrophobic electrophiles. In plants, may have a detoxification role against certain herbicides. This chain is Glutathione S-transferase 1, found in Populus euphratica (Euphrates poplar).